The sequence spans 477 residues: AAA-ATPase At3g28600 (477 aa).

A signal peptide spans 1-26; that stretch reads MMMGNTFGSSLASLFFLWATIQQIFP. Residue 245-252 participates in ATP binding; sequence GPPGTGKS.

Belongs to the AAA ATPase family. BCS1 subfamily. The cofactor is Mg(2+).

The catalysed reaction is ATP + H2O = ADP + phosphate + H(+). This Arabidopsis thaliana (Mouse-ear cress) protein is AAA-ATPase At3g28600.